The primary structure comprises 521 residues: Protein nucleotidyltransferase YdiU (521 aa).

Residues glycine 109, glycine 111, arginine 112, lysine 131, aspartate 143, glycine 144, arginine 194, and arginine 201 each coordinate ATP. The active-site Proton acceptor is aspartate 270. Asparagine 271 and aspartate 280 together coordinate Mg(2+). Residue aspartate 280 coordinates ATP.

It belongs to the SELO family. Mg(2+) serves as cofactor. Mn(2+) is required as a cofactor.

It catalyses the reaction L-seryl-[protein] + ATP = 3-O-(5'-adenylyl)-L-seryl-[protein] + diphosphate. The catalysed reaction is L-threonyl-[protein] + ATP = 3-O-(5'-adenylyl)-L-threonyl-[protein] + diphosphate. The enzyme catalyses L-tyrosyl-[protein] + ATP = O-(5'-adenylyl)-L-tyrosyl-[protein] + diphosphate. It carries out the reaction L-histidyl-[protein] + UTP = N(tele)-(5'-uridylyl)-L-histidyl-[protein] + diphosphate. It catalyses the reaction L-seryl-[protein] + UTP = O-(5'-uridylyl)-L-seryl-[protein] + diphosphate. The catalysed reaction is L-tyrosyl-[protein] + UTP = O-(5'-uridylyl)-L-tyrosyl-[protein] + diphosphate. Functionally, nucleotidyltransferase involved in the post-translational modification of proteins. It can catalyze the addition of adenosine monophosphate (AMP) or uridine monophosphate (UMP) to a protein, resulting in modifications known as AMPylation and UMPylation. The protein is Protein nucleotidyltransferase YdiU of Burkholderia thailandensis (strain ATCC 700388 / DSM 13276 / CCUG 48851 / CIP 106301 / E264).